The chain runs to 212 residues: Lipid A acyltransferase PagP (212 aa).

An N-terminal signal peptide occupies residues 1 to 26; that stretch reads MSSTYFHSSLLAATLFSVTLTAPAFA. The segment covering 29-44 has biased composition (low complexity); the sequence is NTQNTPQTITTKKPQP. Residues 29–50 are disordered; it reads NTQNTPQTITTKKPQPAENTFS. Active-site residues include histidine 84, aspartate 127, and serine 128.

It belongs to the lipid A palmitoyltransferase family. Homodimer.

The protein localises to the cell outer membrane. It carries out the reaction a lipid A + a 1,2-diacyl-sn-glycero-3-phosphocholine = a hepta-acyl lipid A + a 2-acyl-sn-glycero-3-phosphocholine. The enzyme catalyses a lipid IVA + a 1,2-diacyl-sn-glycero-3-phosphocholine = a lipid IVB + a 2-acyl-sn-glycero-3-phosphocholine. It catalyses the reaction a lipid IIA + a 1,2-diacyl-sn-glycero-3-phosphocholine = a lipid IIB + a 2-acyl-sn-glycero-3-phosphocholine. In terms of biological role, transfers a fatty acid residue from the sn-1 position of a phospholipid to the N-linked hydroxyfatty acid chain on the proximal unit of lipid A or its precursors. The chain is Lipid A acyltransferase PagP from Proteus mirabilis (strain HI4320).